We begin with the raw amino-acid sequence, 529 residues long: Cytochrome P450 monooxygenase acuD (529 aa).

Residues 8 to 28 traverse the membrane as a helical segment; the sequence is FAVIAASAAAVAGVLFLIYAA. Residue Asn-81 is glycosylated (N-linked (GlcNAc...) asparagine). A heme-binding site is contributed by Cys-449.

Belongs to the cytochrome P450 family. The cofactor is heme.

It localises to the endoplasmic reticulum membrane. The catalysed reaction is 3-hydroxybenzyl alcohol + reduced [NADPH--hemoprotein reductase] + O2 = gentisyl alcohol + oxidized [NADPH--hemoprotein reductase] + H2O + H(+). Its pathway is secondary metabolite biosynthesis. Cytochrome P450 monooxygenase; part of the gene cluster that mediates the biosynthesis of aculins. The pathway begins with the synthesis of 6-methylsalicylic acid by the polyketide synthase (PKS) acuA via condensation of acetate and malonate units. The 6-methylsalicylic acid decarboxylase acuB then catalyzes the decarboxylation of 6-methylsalicylic acid to yield m-cresol (also known as 3-methylphenol). These first reactions occur in the cytosol. The intermediate m-cresol is then transported into the endoplasmic reticulum where the cytochrome P450 monooxygenase acuC converts it to m-hydroxybenzyl alcohol, which is further converted to gentisyl alcohol by the cytochrome P450 monooxygenase acuD. Gentisyl alcohol is further oxidized by the oxidoreductase acuE that probably catalyzes hydroxylation of the aromatic ring. The aromatic system might then be opened by oxidation through a Baeyer-Villiger type of oxidation, which could be catalyzed by acuF, with the carboxylic acid at C-1 subsequently reduced to an aldehyde by acuG. Subsequently, a hemiacetal is formed, before the dehydrogenase acuH would reduce the double bond between C-4 and C-6. Finally, keto-enol tautomerism results in formation of aculinic acid, which exists as two diastereomers (both R/S configurations at C-1) by non-enzymatic hemiacetal formation. The carboxypeptidase acuI could be involved in the linking of aculinic acid to an aculene A moiety produced by the aculene biosynthesis cluster and which leads to the production of aculin A. AcuI may also be involved in the attachment of proline to aculinic acid to form epi-aculins A and B. The polypeptide is Cytochrome P450 monooxygenase acuD (Aspergillus aculeatus (strain ATCC 16872 / CBS 172.66 / WB 5094)).